The chain runs to 514 residues: Cilia- and flagella-associated protein 53 (514 aa).

Coiled coils occupy residues 91–148 (IINI…RQDF) and 203–474 (KLWE…REFE).

The protein belongs to the CFAP53 family. As to quaternary structure, microtubule inner protein component of sperm flagellar doublet microtubules. Interacts with PIERCE1 and PIERCE2; the interactions link outer dynein arms docking complex (ODA-DC) to the internal microtubule inner proteins (MIP) in cilium axoneme. Interacts with CCDC38. Interacts with CCDC42 and IFT88. Interacts with centriolar satellite proteins PIBF1/CEP90 and PCM1. Interacts with dyneins DNAIC1, DNAIC2 AND DNAH11 and with ODA-DC component ODAD4/TTC25. In terms of tissue distribution, expressed in skin fibroblasts (at protein level). Expressed in nasal respiratory epithelial cells (at protein level). Expressed in airway epithelial cells.

The protein resides in the cytoplasm. It is found in the cytoskeleton. Its subcellular location is the cilium axoneme. It localises to the flagellum axoneme. The protein localises to the microtubule organizing center. The protein resides in the centrosome. It is found in the centriole. Its subcellular location is the centriolar satellite. It localises to the spindle pole. The protein localises to the cell projection. The protein resides in the cilium. In terms of biological role, microtubule inner protein (MIP) part of the dynein-decorated doublet microtubules (DMTs) in cilia axoneme, which is required for motile cilia beating. Regulates motility patterns of both 9+0 and 9+2 motile cilia through differential localization and recruitment of axonemal dynein components. Required for centriolar satellite integrity and non-motile cilium assembly. Required for motile cilium formation. Through its role in the beating of primary cilia, involved in the establishment of organ laterality during embryogenesis. Required for sperm flagellum biogenesis and is essential for male fertility. This chain is Cilia- and flagella-associated protein 53, found in Homo sapiens (Human).